Here is a 293-residue protein sequence, read N- to C-terminus: Inhibitory synaptic factor 1 (293 aa).

Residues 1–26 (MNIRGAPDLGQPSDDPSSGGERERIR) form a disordered region. Residues 30–63 (KMVIGQLEGILRELKEVAKELREVVSQIDKLTSD) are a coiled coil. Disordered regions lie at residues 120 to 186 (TPSD…RERV) and 200 to 293 (DDEE…RGKN). Over residues 171-180 (VKSQLPQRTP) the composition is skewed to polar residues. Residues 200 to 215 (DDEEGDGEQEVEEEEV) show a composition bias toward acidic residues. Polar residues-rich tracts occupy residues 243-256 (SPLTSRHSGSTLAP) and 264-286 (RNSSTQTVSDKSTQTVLPYTATR).

It belongs to the INSYN1 family. As to quaternary structure, interacts with GPHN.

It localises to the postsynaptic density. Component of the protein machinery at the inhibitory synapses, probably acting as a scaffold. Inhibitory synapses dampen neuronal activity through postsynaptic hyperpolarization. This synaptic inhibition is fundamental for the functioning of the central nervous system, shaping and orchestrating the flow of information through neuronal networks to generate a precise neural code. This is Inhibitory synaptic factor 1 from Homo sapiens (Human).